We begin with the raw amino-acid sequence, 536 residues long: Light-independent protochlorophyllide reductase subunit B (536 aa).

Residue D36 participates in [4Fe-4S] cluster binding. The active-site Proton donor is the D292. A substrate-binding site is contributed by 427–428; that stretch reads GL. Low complexity predominate over residues 448 to 469; that stretch reads SHLGHLGGHQSQTEQQQSQAAT. A disordered region spans residues 448 to 489; sequence SHLGHLGGHQSQTEQQQSQAATNPSTQSNADSSSEESPLWTP. Residues 470–483 are compositionally biased toward polar residues; it reads NPSTQSNADSSSEE.

This sequence belongs to the ChlB/BchB/BchZ family. As to quaternary structure, protochlorophyllide reductase is composed of three subunits; ChlL, ChlN and ChlB. Forms a heterotetramer of two ChlB and two ChlN subunits. The cofactor is [4Fe-4S] cluster.

The catalysed reaction is chlorophyllide a + oxidized 2[4Fe-4S]-[ferredoxin] + 2 ADP + 2 phosphate = protochlorophyllide a + reduced 2[4Fe-4S]-[ferredoxin] + 2 ATP + 2 H2O. It participates in porphyrin-containing compound metabolism; chlorophyll biosynthesis (light-independent). Functionally, component of the dark-operative protochlorophyllide reductase (DPOR) that uses Mg-ATP and reduced ferredoxin to reduce ring D of protochlorophyllide (Pchlide) to form chlorophyllide a (Chlide). This reaction is light-independent. The NB-protein (ChlN-ChlB) is the catalytic component of the complex. The chain is Light-independent protochlorophyllide reductase subunit B from Prochlorococcus marinus (strain MIT 9313).